The sequence spans 45 residues: Photosystem II reaction center protein K (45 aa).

A propeptide spanning residues 1–8 (MNSALFLA) is cleaved from the precursor. The chain crosses the membrane as a helical span at residues 23 to 43 (ILPVIPVFFLLLAFVWQAAIG).

It belongs to the PsbK family. As to quaternary structure, PSII is composed of 1 copy each of membrane proteins PsbA, PsbB, PsbC, PsbD, PsbE, PsbF, PsbH, PsbI, PsbJ, PsbK, PsbL, PsbM, PsbT, PsbX, PsbY, PsbZ, Psb30/Ycf12, at least 3 peripheral proteins of the oxygen-evolving complex and a large number of cofactors. It forms dimeric complexes.

Its subcellular location is the plastid. The protein resides in the chloroplast thylakoid membrane. One of the components of the core complex of photosystem II (PSII). PSII is a light-driven water:plastoquinone oxidoreductase that uses light energy to abstract electrons from H(2)O, generating O(2) and a proton gradient subsequently used for ATP formation. It consists of a core antenna complex that captures photons, and an electron transfer chain that converts photonic excitation into a charge separation. The chain is Photosystem II reaction center protein K from Pyropia yezoensis (Susabi-nori).